The chain runs to 471 residues: 3-isopropylmalate dehydratase large subunit (471 aa).

Residues C347, C407, and C410 each coordinate [4Fe-4S] cluster.

Belongs to the aconitase/IPM isomerase family. LeuC type 1 subfamily. In terms of assembly, heterodimer of LeuC and LeuD. The cofactor is [4Fe-4S] cluster.

It carries out the reaction (2R,3S)-3-isopropylmalate = (2S)-2-isopropylmalate. It functions in the pathway amino-acid biosynthesis; L-leucine biosynthesis; L-leucine from 3-methyl-2-oxobutanoate: step 2/4. In terms of biological role, catalyzes the isomerization between 2-isopropylmalate and 3-isopropylmalate, via the formation of 2-isopropylmaleate. The chain is 3-isopropylmalate dehydratase large subunit from Granulibacter bethesdensis (strain ATCC BAA-1260 / CGDNIH1).